Reading from the N-terminus, the 170-residue chain is Large ribosomal subunit protein uL10 (170 aa).

Belongs to the universal ribosomal protein uL10 family. As to quaternary structure, part of the ribosomal stalk of the 50S ribosomal subunit. The N-terminus interacts with L11 and the large rRNA to form the base of the stalk. The C-terminus forms an elongated spine to which L12 dimers bind in a sequential fashion forming a multimeric L10(L12)X complex.

Functionally, forms part of the ribosomal stalk, playing a central role in the interaction of the ribosome with GTP-bound translation factors. The sequence is that of Large ribosomal subunit protein uL10 from Jannaschia sp. (strain CCS1).